A 321-amino-acid polypeptide reads, in one-letter code: Protein FAM110C (321 aa).

Disordered regions lie at residues 1 to 84 (MRAL…APAP) and 111 to 203 (RGSG…SQSD). 2 stretches are compositionally biased toward basic and acidic residues: residues 15-46 (LLPRDPAATRDPDAARPARRSAVERLAADRAK) and 131-145 (GKDKAPVPRTGDEGK). The span at 169-181 (APAARSAAPSSVP) shows a compositional bias: low complexity. Phosphoserine is present on S241.

The protein belongs to the FAM110 family. As to quaternary structure, interacts with AKT1; the interaction is transient and follows AKT1 activation. Interacts with PPP2CA and alpha-tubulin. As to expression, detected in stomach, thyroid, trachea, adrenal gland and testis, and at low levels in prostate, ovary, intestine, colon, spinal cord and lymph node.

The protein localises to the cytoplasm. It localises to the cytoskeleton. Its subcellular location is the microtubule organizing center. It is found in the centrosome. The protein resides in the spindle pole. The protein localises to the nucleus. Its function is as follows. May play a role in microtubule organization. May play a role in cell spreading and cell migration of epithelial cells; the function may involve the AKT1 signaling pathway. This chain is Protein FAM110C (FAM110C), found in Homo sapiens (Human).